The sequence spans 289 residues: Pyridoxal kinase PdxY (289 aa).

Residues Ser9 and 44–45 each bind substrate; that span reads TQ. Residues Asp112, Ala144, Glu149, and Lys182 each coordinate ATP. Position 225 (Asp225) interacts with substrate.

It belongs to the pyridoxine kinase family. PdxY subfamily. Homodimer. It depends on Mg(2+) as a cofactor.

It catalyses the reaction pyridoxal + ATP = pyridoxal 5'-phosphate + ADP + H(+). The protein operates within cofactor metabolism; pyridoxal 5'-phosphate salvage; pyridoxal 5'-phosphate from pyridoxal: step 1/1. Pyridoxal kinase involved in the salvage pathway of pyridoxal 5'-phosphate (PLP). Catalyzes the phosphorylation of pyridoxal to PLP. The chain is Pyridoxal kinase PdxY from Aliivibrio fischeri (strain ATCC 700601 / ES114) (Vibrio fischeri).